A 351-amino-acid polypeptide reads, in one-letter code: UDP-3-O-acylglucosamine N-acyltransferase (351 aa).

The active-site Proton acceptor is H240.

This sequence belongs to the transferase hexapeptide repeat family. LpxD subfamily. In terms of assembly, homotrimer.

The enzyme catalyses a UDP-3-O-[(3R)-3-hydroxyacyl]-alpha-D-glucosamine + a (3R)-hydroxyacyl-[ACP] = a UDP-2-N,3-O-bis[(3R)-3-hydroxyacyl]-alpha-D-glucosamine + holo-[ACP] + H(+). Its pathway is bacterial outer membrane biogenesis; LPS lipid A biosynthesis. Functionally, catalyzes the N-acylation of UDP-3-O-acylglucosamine using 3-hydroxyacyl-ACP as the acyl donor. Is involved in the biosynthesis of lipid A, a phosphorylated glycolipid that anchors the lipopolysaccharide to the outer membrane of the cell. This chain is UDP-3-O-acylglucosamine N-acyltransferase, found in Pseudomonas fluorescens (strain SBW25).